The sequence spans 292 residues: MSENRPEPVAAETSAATTARHSQADAGAHDAVRRGRHELPADHPRSKVGPLRRTRLTEILRGGRSRLVFGTLAILLCLVLGVAIVTQVRQTDSGDSLETARPADLLVLLDSLRQREATLNAEVIDLQNTLNALQASGNTDQAALESAQARLAALSILVGAVGATGPGVMITIDDPGPGVAPEVMIDVINELRAAGAEAIQINDAHRSVRVGVDTWVVGVPGSLTVDTKVLSPPYSILAIGDPPTLAAAMNIPGGAQDGVKRVGGRMVVQQADRVDVTALRQPKQHQYAQPVK.

The signal sequence occupies residues 1-28; the sequence is MSENRPEPVAAETSAATTARHSQADAGA. A disordered region spans residues 1–30; that stretch reads MSENRPEPVAAETSAATTARHSQADAGAHD. The next 3 membrane-spanning stretches (helical) occupy residues 68–88, 152–172, and 229–249; these read VFGT…VTQV, AALS…MITI, and VLSP…AAAM.

The protein belongs to the UPF0749 family.

The protein resides in the cell membrane. The sequence is that of UPF0749 protein Mb1856 from Mycobacterium bovis (strain ATCC BAA-935 / AF2122/97).